The following is a 305-amino-acid chain: Nucleotide-binding protein Rxyl_2009 (305 aa).

24 to 31 (GLSGAGKS) contributes to the ATP binding site. 75 to 78 (DIRG) contacts GTP.

It belongs to the RapZ-like family.

Functionally, displays ATPase and GTPase activities. The chain is Nucleotide-binding protein Rxyl_2009 from Rubrobacter xylanophilus (strain DSM 9941 / JCM 11954 / NBRC 16129 / PRD-1).